Here is a 257-residue protein sequence, read N- to C-terminus: tRNA uridine(34) hydroxylase (257 aa).

Residues 128-222 (NGRRLVMLDA…YFEQVGGEGY (95 aa)) enclose the Rhodanese domain. Cys-182 (cysteine persulfide intermediate) is an active-site residue.

It belongs to the TrhO family.

It carries out the reaction uridine(34) in tRNA + AH2 + O2 = 5-hydroxyuridine(34) in tRNA + A + H2O. Catalyzes oxygen-dependent 5-hydroxyuridine (ho5U) modification at position 34 in tRNAs. In Xylella fastidiosa (strain 9a5c), this protein is tRNA uridine(34) hydroxylase.